The primary structure comprises 428 residues: Enolase (428 aa).

Q163 contributes to the (2R)-2-phosphoglycerate binding site. The active-site Proton donor is E205. Mg(2+) is bound by residues D242, E285, and D312. 4 residues coordinate (2R)-2-phosphoglycerate: K337, R366, S367, and K388. The active-site Proton acceptor is K337.

Belongs to the enolase family. Mg(2+) is required as a cofactor.

It is found in the cytoplasm. It localises to the secreted. The protein resides in the cell surface. It catalyses the reaction (2R)-2-phosphoglycerate = phosphoenolpyruvate + H2O. It functions in the pathway carbohydrate degradation; glycolysis; pyruvate from D-glyceraldehyde 3-phosphate: step 4/5. In terms of biological role, catalyzes the reversible conversion of 2-phosphoglycerate (2-PG) into phosphoenolpyruvate (PEP). It is essential for the degradation of carbohydrates via glycolysis. In Neisseria meningitidis serogroup C (strain 053442), this protein is Enolase.